Reading from the N-terminus, the 231-residue chain is MASTASEIIAFMVSISGWVLVSSTLPTDYWKVSTIDGTVITTATYWANLWKTCVTDSTGVSNCKDFPSMLALDGYIQACRGLMIAAVSLGFFGSIFALIGMKCTKVGGSDKAKAKIACLAGIVFILSGLCSMTGCSLYANKITTEFFDPLFVEQKYELGAALFIGWAGASLCLIGGVIFCFSISDNNKAPRMGYTYNGATSVMSSRTKYHGREGDLKTPNPSKQFDKNAYV.

A helical membrane pass occupies residues 1–21 (MASTASEIIAFMVSISGWVLV). Residues 22-80 (SSTLPTDYWKVSTIDGTVITTATYWANLWKTCVTDSTGVSNCKDFPSMLALDGYIQACR) are Extracellular-facing. The helical transmembrane segment at 81-101 (GLMIAAVSLGFFGSIFALIGM) threads the bilayer. The Cytoplasmic segment spans residues 102 to 115 (KCTKVGGSDKAKAK). The chain crosses the membrane as a helical span at residues 116 to 136 (IACLAGIVFILSGLCSMTGCS). The Extracellular segment spans residues 137–160 (LYANKITTEFFDPLFVEQKYELGA). The chain crosses the membrane as a helical span at residues 161 to 181 (ALFIGWAGASLCLIGGVIFCF). The Cytoplasmic segment spans residues 182 to 231 (SISDNNKAPRMGYTYNGATSVMSSRTKYHGREGDLKTPNPSKQFDKNAYV).

Belongs to the claudin family. In terms of assembly, can form homodimers both in trans (interaction between CLDN10 molecules in opposing membranes) and in cis (interaction between CLDN10 molecules within one membrane). Interacts with CLDN19.

It is found in the cell junction. Its subcellular location is the tight junction. The protein resides in the cell membrane. It catalyses the reaction Na(+)(in) = Na(+)(out). The catalysed reaction is Li(+)(in) = Li(+)(out). The enzyme catalyses K(+)(in) = K(+)(out). It carries out the reaction Rb(+)(in) = Rb(+)(out). It catalyses the reaction Cs(+)(in) = Cs(+)(out). The catalysed reaction is NH4(+)(in) = NH4(+)(out). The enzyme catalyses methylamine(out) = methylamine(in). It carries out the reaction Mg(2+)(in) = Mg(2+)(out). It catalyses the reaction Ca(2+)(in) = Ca(2+)(out). The catalysed reaction is Sr(2+)(in) = Sr(2+)(out). The enzyme catalyses chloride(in) = chloride(out). It carries out the reaction nitrate(in) = nitrate(out). In terms of biological role, forms paracellular channels: polymerizes in tight junction strands with cation- and anion-selective channels through the strands, conveying epithelial permeability in a process known as paracellular tight junction permeability. In sweat glands and in the thick ascending limb (TAL) of Henle's loop in kidney, it controls paracellular sodium permeability which is essential for proper sweat production and renal function. In renal proximal tubules, it conveys selective chloride over hydrogencarbonate anion permeability which is required for renal chloride reabsorption and salt homeostasis. In Bos taurus (Bovine), this protein is Claudin-10 (CLDN10).